The chain runs to 362 residues: D-alanine--D-alanine ligase (362 aa).

Residues 141-346 (KNIFAEAGLN…YPELIEELIR (206 aa)) form the ATP-grasp domain. 174–229 (EEALGYPCFVKPANLGSSVGINKCKDREELEKAFEEAFQFDRKIIVEENIIGREVE) serves as a coordination point for ATP. D300, E313, and N315 together coordinate Mg(2+).

The protein belongs to the D-alanine--D-alanine ligase family. Mg(2+) is required as a cofactor. It depends on Mn(2+) as a cofactor.

It is found in the cytoplasm. The catalysed reaction is 2 D-alanine + ATP = D-alanyl-D-alanine + ADP + phosphate + H(+). Its pathway is cell wall biogenesis; peptidoglycan biosynthesis. Its function is as follows. Cell wall formation. This Bacillus cytotoxicus (strain DSM 22905 / CIP 110041 / 391-98 / NVH 391-98) protein is D-alanine--D-alanine ligase.